Reading from the N-terminus, the 209-residue chain is Prolactin (209 aa).

Positions 1–24 (MAQRFKGSNLFLTALLCLASQGHA) are cleaved as a signal peptide. 2 disulfide bridges follow: C70–C184 and C201–C209.

The protein belongs to the somatotropin/prolactin family.

Its subcellular location is the secreted. The protein is Prolactin (prl) of Anguilla japonica (Japanese eel).